The sequence spans 71 residues: MRVLFFVFGVLSLMFTVPPARSFISNDECPSEYYYHCRLKCNADEHAIRYCADFSICCKLKIIEIHGQKKW.

An N-terminal signal peptide occupies residues 1-22; the sequence is MRVLFFVFGVLSLMFTVPPARS. Disulfide bonds link Cys-29-Cys-57, Cys-37-Cys-51, and Cys-41-Cys-58.

This sequence belongs to the beta-defensin family.

The protein resides in the secreted. Its function is as follows. Has antibacterial activity. Upon stimulation with lipoteichoic acid, promotes cytokines and chemokines production and secretion. The polypeptide is Beta-defensin 131A (Pan troglodytes (Chimpanzee)).